Reading from the N-terminus, the 543-residue chain is MLCHQCQETIKGTGCTQMGVCGKKDNTANLQDVLIYTLKGIAYVSNKTGITNNEIDSHIVDSLFATITNVNFDDKYIIERIKKGLKLKNDLRTKCGCTPEKCGELPDFVTWDAKNDLEILEKAKSKEISLEIPENEDMRSLRKITLYGIKGLCAYLHHANVLGYNDEEIQKFIKKALIDISDDLKSPEELTALVLETGKYVVDTMALLDKANTESYGNPEITEVNIGVKNNHGILISGHDLKDLEQLLNQTKGTGIDVYTHSEMLPAHYYPAFKKYDNFVGNYGGSWYLQKTEFDSFNGPIVMTTNCLVPPADEYKNRVYVTGVVGYPDVKTIPVNEDGTKDFSKVIEHAKLCKPPKELETGKIVGGFAHNQVLALADKVIDAVKSGAIKKFVVMAGCDGRHKTREYYTDFAKKLPKDAVILTAGCAKYRYNKLDLGDIGGIPRILDAGQCNDCYSLAVIALKLKEAFGLNDVNELPIVYNIAWYEQKAVAVLLALLYLGIQNIHLGPTLPDFISPNVAKLLVEKFKLNGITTVNEDMNLLLE.

The [4Fe-4S] cluster site is built by Cys3, Cys6, Cys15, and Cys21. Residues His239, Glu263, Cys307, Cys398, Cys426, Cys451, Glu486, and Lys488 each contribute to the hybrid [4Fe-2O-2S] cluster site. The residue at position 398 (Cys398) is a Cysteine persulfide.

It belongs to the HCP family. [4Fe-4S] cluster serves as cofactor. Requires hybrid [4Fe-2O-2S] cluster as cofactor.

The protein localises to the cytoplasm. It catalyses the reaction A + NH4(+) + H2O = hydroxylamine + AH2 + H(+). Its function is as follows. Catalyzes the reduction of hydroxylamine to form NH(3) and H(2)O. This chain is Hydroxylamine reductase, found in Methanococcus vannielii (strain ATCC 35089 / DSM 1224 / JCM 13029 / OCM 148 / SB).